The primary structure comprises 225 residues: MIEHTTIALLSGGIDSATAACIAMEAGQKVIGLSFDYGQRHLKELQAAADLAKNLNLEDHITIKIDLSSWGGSSLTDTSQAIPTQGIQKNTIPNTYVPGRNTIFVAIGLSLAEARGANRIALGINAMDYSGYPDCRPDYLKAYQELANLSSRVGREGNGIKLWAPLLDWEKTKIFEEALRLKIPIEKTWSCYQGESKPCGKCDSCRIRDKALKEIGREDLCSQNI.

10-20 (LSGGIDSATAA) provides a ligand contact to ATP. Zn(2+)-binding residues include Cys-191, Cys-199, Cys-202, and Cys-205.

Belongs to the QueC family. It depends on Zn(2+) as a cofactor.

It carries out the reaction 7-carboxy-7-deazaguanine + NH4(+) + ATP = 7-cyano-7-deazaguanine + ADP + phosphate + H2O + H(+). Its pathway is purine metabolism; 7-cyano-7-deazaguanine biosynthesis. Functionally, catalyzes the ATP-dependent conversion of 7-carboxy-7-deazaguanine (CDG) to 7-cyano-7-deazaguanine (preQ(0)). This Prochlorococcus marinus (strain NATL2A) protein is 7-cyano-7-deazaguanine synthase.